Here is a 185-residue protein sequence, read N- to C-terminus: Thioredoxin F2, chloroplastic (185 aa).

One can recognise a Thioredoxin domain in the interval 59-184 (RRIGSCVVRC…LLAAIEAARS (126 aa)). Active-site nucleophile residues include Cys109 and Cys112. A disulfide bridge connects residues Cys109 and Cys112. Residue Cys136 is modified to S-glutathionyl cysteine; transient.

It belongs to the thioredoxin family. Plant F-type subfamily. Post-translationally, glutathionylation at Cys-136 decreases its ability to be reduced by ferredoxin-thioredoxin reductase and reduces its efficiency in activating target chloroplastic enzymes.

It localises to the plastid. It is found in the chloroplast stroma. Probable thiol-disulfide oxidoreductase involved in the redox regulation of enzymes of both reductive pentose phosphate pathway (Calvin-Benson cycle) and oxidative pentose phosphate pathway. This is Thioredoxin F2, chloroplastic from Arabidopsis thaliana (Mouse-ear cress).